A 512-amino-acid polypeptide reads, in one-letter code: Maturase K (512 aa).

This sequence belongs to the intron maturase 2 family. MatK subfamily.

It is found in the plastid. The protein resides in the chloroplast. Its function is as follows. Usually encoded in the trnK tRNA gene intron. Probably assists in splicing its own and other chloroplast group II introns. The sequence is that of Maturase K from Alisma canaliculatum (Water plantain).